The sequence spans 129 residues: Large ribosomal subunit protein bL20 (129 aa).

The protein belongs to the bacterial ribosomal protein bL20 family.

In terms of biological role, binds directly to 23S ribosomal RNA and is necessary for the in vitro assembly process of the 50S ribosomal subunit. It is not involved in the protein synthesizing functions of that subunit. The polypeptide is Large ribosomal subunit protein bL20 (Mycobacterium tuberculosis (strain ATCC 25177 / H37Ra)).